Consider the following 1047-residue polypeptide: Isoleucine--tRNA ligase (1047 aa).

A 'HIGH' region motif is present at residues Pro52–His62. The short motif at Lys600–His604 is the 'KMSKS' region element. Lys603 lines the ATP pocket.

The protein belongs to the class-I aminoacyl-tRNA synthetase family. IleS type 2 subfamily. As to quaternary structure, monomer. It depends on Zn(2+) as a cofactor.

The protein resides in the cytoplasm. The enzyme catalyses tRNA(Ile) + L-isoleucine + ATP = L-isoleucyl-tRNA(Ile) + AMP + diphosphate. Its function is as follows. Catalyzes the attachment of isoleucine to tRNA(Ile). As IleRS can inadvertently accommodate and process structurally similar amino acids such as valine, to avoid such errors it has two additional distinct tRNA(Ile)-dependent editing activities. One activity is designated as 'pretransfer' editing and involves the hydrolysis of activated Val-AMP. The other activity is designated 'posttransfer' editing and involves deacylation of mischarged Val-tRNA(Ile). The sequence is that of Isoleucine--tRNA ligase from Streptomyces coelicolor (strain ATCC BAA-471 / A3(2) / M145).